Here is a 383-residue protein sequence, read N- to C-terminus: Succinyl-diaminopimelate desuccinylase (383 aa).

His73 is a binding site for Zn(2+). Residue Asp75 is part of the active site. Zn(2+) is bound at residue Asp107. The Proton acceptor role is filled by Glu141. The Zn(2+) site is built by Glu142, Glu170, and His356.

Belongs to the peptidase M20A family. DapE subfamily. As to quaternary structure, homodimer. The cofactor is Zn(2+). Co(2+) serves as cofactor.

The enzyme catalyses N-succinyl-(2S,6S)-2,6-diaminopimelate + H2O = (2S,6S)-2,6-diaminopimelate + succinate. It participates in amino-acid biosynthesis; L-lysine biosynthesis via DAP pathway; LL-2,6-diaminopimelate from (S)-tetrahydrodipicolinate (succinylase route): step 3/3. Functionally, catalyzes the hydrolysis of N-succinyl-L,L-diaminopimelic acid (SDAP), forming succinate and LL-2,6-diaminopimelate (DAP), an intermediate involved in the bacterial biosynthesis of lysine and meso-diaminopimelic acid, an essential component of bacterial cell walls. This Pseudomonas putida (strain W619) protein is Succinyl-diaminopimelate desuccinylase.